The following is a 198-amino-acid chain: Recombination protein RecR (198 aa).

The C4-type zinc finger occupies 57 to 72; sequence CSVCGNITDEDPCEIC. One can recognise a Toprim domain in the interval 80-175; it reads EMILVVEQPK…KVTRLAHGLA (96 aa).

Belongs to the RecR family.

Its function is as follows. May play a role in DNA repair. It seems to be involved in an RecBC-independent recombinational process of DNA repair. It may act with RecF and RecO. The protein is Recombination protein RecR of Latilactobacillus sakei subsp. sakei (strain 23K) (Lactobacillus sakei subsp. sakei).